The primary structure comprises 657 residues: Probable potassium transport system protein Kup (657 aa).

The tract at residues 1–25 is disordered; that stretch reads MGSGPADEEHTVDTEPGVSPPRRTV. The next 12 helical transmembrane spans lie at 35–55, 77–97, 127–147, 165–185, 196–216, 234–254, 275–295, 315–335, 365–385, 394–414, 422–442, and 447–467; these read VVVG…IYTI, VVSL…VLLV, TAVL…DSMI, PGLE…LFSV, LFGP…VSGI, FFFG…LAVT, WLVL…ALLL, WPMV…VITG, IYVP…VFAF, AFGM…FYIV, LWLV…FLAA, and LVHG…VMTT.

It belongs to the HAK/KUP transporter (TC 2.A.72) family.

It is found in the cell membrane. The enzyme catalyses K(+)(in) + H(+)(in) = K(+)(out) + H(+)(out). Its function is as follows. Transport of potassium into the cell. Likely operates as a K(+):H(+) symporter. The protein is Probable potassium transport system protein Kup of Rhodococcus jostii (strain RHA1).